An 874-amino-acid chain; its full sequence is Alanine--tRNA ligase (874 aa).

Zn(2+) is bound by residues histidine 565, histidine 569, cysteine 666, and histidine 670.

It belongs to the class-II aminoacyl-tRNA synthetase family. It depends on Zn(2+) as a cofactor.

It is found in the cytoplasm. The enzyme catalyses tRNA(Ala) + L-alanine + ATP = L-alanyl-tRNA(Ala) + AMP + diphosphate. In terms of biological role, catalyzes the attachment of alanine to tRNA(Ala) in a two-step reaction: alanine is first activated by ATP to form Ala-AMP and then transferred to the acceptor end of tRNA(Ala). Also edits incorrectly charged Ser-tRNA(Ala) and Gly-tRNA(Ala) via its editing domain. The sequence is that of Alanine--tRNA ligase from Polynucleobacter asymbioticus (strain DSM 18221 / CIP 109841 / QLW-P1DMWA-1) (Polynucleobacter necessarius subsp. asymbioticus).